The following is a 216-amino-acid chain: GTP cyclohydrolase 1 (216 aa).

Zn(2+) contacts are provided by Cys108, His111, and Cys179.

The protein belongs to the GTP cyclohydrolase I family. In terms of assembly, toroid-shaped homodecamer, composed of two pentamers of five dimers.

The catalysed reaction is GTP + H2O = 7,8-dihydroneopterin 3'-triphosphate + formate + H(+). The protein operates within cofactor biosynthesis; 7,8-dihydroneopterin triphosphate biosynthesis; 7,8-dihydroneopterin triphosphate from GTP: step 1/1. This chain is GTP cyclohydrolase 1, found in Shewanella sp. (strain ANA-3).